We begin with the raw amino-acid sequence, 238 residues long: Large ribosomal subunit protein uL2 (238 aa).

The segment at 199 to 238 (PHGGGLHQSVSRSSTVARNTPPGRKVGHIAARRTGRRDRK) is disordered. Polar residues predominate over residues 206–216 (QSVSRSSTVAR). A compositionally biased stretch (basic residues) spans 223–238 (KVGHIAARRTGRRDRK).

The protein belongs to the universal ribosomal protein uL2 family. As to quaternary structure, part of the 50S ribosomal subunit. Forms a bridge to the 30S subunit in the 70S ribosome.

Functionally, one of the primary rRNA binding proteins. Required for association of the 30S and 50S subunits to form the 70S ribosome, for tRNA binding and peptide bond formation. It has been suggested to have peptidyltransferase activity; this is somewhat controversial. Makes several contacts with the 16S rRNA in the 70S ribosome. The sequence is that of Large ribosomal subunit protein uL2 from Metallosphaera sedula (strain ATCC 51363 / DSM 5348 / JCM 9185 / NBRC 15509 / TH2).